The primary structure comprises 107 residues: Replication initiation control protein YabA (107 aa).

The Zn(2+) site is built by His-81, Cys-83, Cys-97, and Cys-100.

Belongs to the YabA family. As to quaternary structure, homotetramer. Interacts with both DnaA and DnaN, acting as a bridge between these two proteins. The cofactor is Zn(2+).

The protein resides in the cytoplasm. It localises to the nucleoid. Its function is as follows. Involved in control of chromosome replication initiation. Inhibits the cooperative binding of DnaA to the oriC region, thus negatively regulating initiation of chromosome replication. Inhibits the ability of DnaA-ATP to form a helix on DNA; does not disassemble preformed DnaA-DNA helices. Decreases the residence time of DnaA on the chromosome at its binding sites (oriC, replication forks and promoter-binding sites). Tethers DnaA to the replication machinery via the DNA polymerase beta sliding clamp subunit (dnaN). Associates with oriC and other DnaA targets on the chromosome in a DnaA-dependent manner. The chain is Replication initiation control protein YabA from Streptococcus pyogenes serotype M18 (strain MGAS8232).